The primary structure comprises 248 residues: Type III pantothenate kinase (248 aa).

6–13 (DIGNTETK) provides a ligand contact to ATP. 103-106 (GSDR) serves as a coordination point for substrate. Asp105 (proton acceptor) is an active-site residue. Position 124 (Asp124) interacts with K(+). Thr127 provides a ligand contact to ATP. Residue Thr178 participates in substrate binding.

The protein belongs to the type III pantothenate kinase family. In terms of assembly, homodimer. It depends on NH4(+) as a cofactor. Requires K(+) as cofactor.

The protein localises to the cytoplasm. It catalyses the reaction (R)-pantothenate + ATP = (R)-4'-phosphopantothenate + ADP + H(+). The protein operates within cofactor biosynthesis; coenzyme A biosynthesis; CoA from (R)-pantothenate: step 1/5. Its function is as follows. Catalyzes the phosphorylation of pantothenate (Pan), the first step in CoA biosynthesis. This chain is Type III pantothenate kinase, found in Pelagibacter ubique (strain HTCC1062).